Consider the following 441-residue polypeptide: Tubulin beta-1 chain (441 aa).

Residues Gln-11, Glu-69, Ser-138, Gly-142, Thr-143, Gly-144, Asn-204, and Asn-226 each coordinate GTP. Position 69 (Glu-69) interacts with Mg(2+).

It belongs to the tubulin family. As to quaternary structure, dimer of alpha and beta chains. A typical microtubule is a hollow water-filled tube with an outer diameter of 25 nm and an inner diameter of 15 nM. Alpha-beta heterodimers associate head-to-tail to form protofilaments running lengthwise along the microtubule wall with the beta-tubulin subunit facing the microtubule plus end conferring a structural polarity. Microtubules usually have 13 protofilaments but different protofilament numbers can be found in some organisms and specialized cells. Requires Mg(2+) as cofactor. As to expression, expressed primarily in touch receptor neurons.

The protein resides in the cytoplasm. The protein localises to the cytoskeleton. In terms of biological role, TTubulin is the major constituent of microtubules, a cylinder consisting of laterally associated linear protofilaments composed of alpha- and beta-tubulin heterodimers. Microtubules grow by the addition of GTP-tubulin dimers to the microtubule end, where a stabilizing cap forms. Below the cap, tubulin dimers are in GDP-bound state, owing to GTPase activity of alpha-tubulin. Plays a role in mechanosensory transduction (touch sensitivity). Its function is as follows. Mec-7 beta-tubulin is required for the production of 15-protofilament microtubules. This chain is Tubulin beta-1 chain (mec-7), found in Caenorhabditis elegans.